The chain runs to 61 residues: Large ribosomal subunit protein bL32 (61 aa).

The protein belongs to the bacterial ribosomal protein bL32 family.

The polypeptide is Large ribosomal subunit protein bL32 (Phytoplasma mali (strain AT)).